A 771-amino-acid polypeptide reads, in one-letter code: Topoisomerase 1-associated factor 2 (771 aa).

3 disordered regions span residues 48–69 (NSINNCSDPSPTSPSSQNSIQS), 271–330 (EGVV…ISFD), and 346–367 (SDMHIQYSNPSSGAHSPRKSSL). Residues 51-69 (NNCSDPSPTSPSSQNSIQS) are compositionally biased toward low complexity. Polar residues predominate over residues 275–294 (TQGSDNNKENIPSSTQQQKN). The segment covering 295–307 (DGAKRAESKDLDL) has biased composition (basic and acidic residues). Over residues 346-359 (SDMHIQYSNPSSGA) the composition is skewed to polar residues. Position 397 is a phosphoserine (Ser-397). The residue at position 405 (Thr-405) is a Phosphothreonine. The tract at residues 633–771 (NSKDKVEATS…KYVESDEDDQ (139 aa)) is disordered. Polar residues predominate over residues 640–652 (ATSNSTAQEQEQV). Over residues 690-709 (SHSSPSSSSSMSLESSLDSS) the composition is skewed to low complexity.

It to yeast YJL076w. Interacts with HPR1.

It localises to the nucleus. This chain is Topoisomerase 1-associated factor 2 (TOF2), found in Saccharomyces cerevisiae (strain ATCC 204508 / S288c) (Baker's yeast).